Consider the following 500-residue polypeptide: UDP-GalNAc:beta-1,3-N-acetylgalactosaminyltransferase 2 (500 aa).

Residues 1 to 6 (MRNWLV) lie on the Cytoplasmic side of the membrane. A helical; Signal-anchor for type II membrane protein transmembrane segment spans residues 7–23 (LLCPCVLGAALHLWLRL). Residues 24-500 (RSPPPACASG…CGDPCRCQAR (477 aa)) are Lumenal-facing. N-linked (GlcNAc...) asparagine glycans are attached at residues asparagine 116 and asparagine 174.

Belongs to the glycosyltransferase 31 family. N-glycosylated. In terms of tissue distribution, expressed in all tissues examined, but at highest levels in testis, adipose tissue, skeletal muscle and ovary.

The protein resides in the golgi apparatus membrane. It localises to the endoplasmic reticulum. The catalysed reaction is 3-O-(N-acetyl-beta-D-glucosaminyl-(1-&gt;4)-alpha-D-mannosyl)-L-threonyl-[protein] + UDP-N-acetyl-alpha-D-galactosamine = 3-O-[beta-D-GalNAc-(1-&gt;3)-beta-D-GlcNAc-(1-&gt;4)-alpha-D-Man]-L-Thr-[protein] + UDP + H(+). The protein operates within protein modification; protein glycosylation. In terms of biological role, beta-1,3-N-acetylgalactosaminyltransferase that synthesizes a unique carbohydrate structure, GalNAc-beta-1-3GlcNAc, on N- and O-glycans. Has no galactose nor galactosaminyl transferase activity toward any acceptor substrate. Involved in alpha-dystroglycan (DAG1) glycosylation: acts coordinately with GTDC2/POMGnT2 to synthesize a GalNAc-beta3-GlcNAc-beta-terminus at the 4-position of protein O-mannose in the biosynthesis of the phosphorylated O-mannosyl trisaccharide (N-acetylgalactosamine-beta-3-N-acetylglucosamine-beta-4-(phosphate-6-)mannose), a carbohydrate structure present in alpha-dystroglycan, which is required for binding laminin G-like domain-containing extracellular proteins with high affinity. This Homo sapiens (Human) protein is UDP-GalNAc:beta-1,3-N-acetylgalactosaminyltransferase 2 (B3GALNT2).